The chain runs to 311 residues: Ribosomal RNA small subunit methyltransferase H (311 aa).

Residues 32–34 (AGH), aspartate 52, phenylalanine 79, aspartate 100, and glutamine 107 contribute to the S-adenosyl-L-methionine site.

Belongs to the methyltransferase superfamily. RsmH family.

It localises to the cytoplasm. It carries out the reaction cytidine(1402) in 16S rRNA + S-adenosyl-L-methionine = N(4)-methylcytidine(1402) in 16S rRNA + S-adenosyl-L-homocysteine + H(+). Specifically methylates the N4 position of cytidine in position 1402 (C1402) of 16S rRNA. This Staphylococcus aureus (strain bovine RF122 / ET3-1) protein is Ribosomal RNA small subunit methyltransferase H.